Reading from the N-terminus, the 73-residue chain is Small ribosomal subunit protein bS18 (73 aa).

The protein belongs to the bacterial ribosomal protein bS18 family. As to quaternary structure, part of the 30S ribosomal subunit. Forms a tight heterodimer with protein bS6.

Its function is as follows. Binds as a heterodimer with protein bS6 to the central domain of the 16S rRNA, where it helps stabilize the platform of the 30S subunit. The chain is Small ribosomal subunit protein bS18 from Synechococcus sp. (strain RCC307).